A 178-amino-acid chain; its full sequence is Large ribosomal subunit protein uL6 (178 aa).

This sequence belongs to the universal ribosomal protein uL6 family. Part of the 50S ribosomal subunit.

Its function is as follows. This protein binds to the 23S rRNA, and is important in its secondary structure. It is located near the subunit interface in the base of the L7/L12 stalk, and near the tRNA binding site of the peptidyltransferase center. The sequence is that of Large ribosomal subunit protein uL6 from Gluconobacter oxydans (strain 621H) (Gluconobacter suboxydans).